The primary structure comprises 156 residues: Small ribosomal subunit protein uS7c (156 aa).

The protein belongs to the universal ribosomal protein uS7 family. Part of the 30S ribosomal subunit.

It is found in the plastid. The protein resides in the chloroplast. Its function is as follows. One of the primary rRNA binding proteins, it binds directly to 16S rRNA where it nucleates assembly of the head domain of the 30S subunit. This chain is Small ribosomal subunit protein uS7c (rps7), found in Thalassiosira pseudonana (Marine diatom).